Reading from the N-terminus, the 135-residue chain is MTRSTSSAPSQRMLRVGEQVRAAITQVLQRGEVRDPLIEKTVISISEVRMSPDLKIATAYVTPLGVADHAAVIEALNKHAKFIRGRLGPQLRQMKYMPDVRFRDDTSFDNYQKIDALLRSPEVSRDLDPDTDDQE.

This sequence belongs to the RbfA family. In terms of assembly, monomer. Binds 30S ribosomal subunits, but not 50S ribosomal subunits or 70S ribosomes.

It localises to the cytoplasm. Functionally, one of several proteins that assist in the late maturation steps of the functional core of the 30S ribosomal subunit. Associates with free 30S ribosomal subunits (but not with 30S subunits that are part of 70S ribosomes or polysomes). Required for efficient processing of 16S rRNA. May interact with the 5'-terminal helix region of 16S rRNA. This is Ribosome-binding factor A from Sinorhizobium fredii (strain NBRC 101917 / NGR234).